Here is a 235-residue protein sequence, read N- to C-terminus: 15,16-dihydrobiliverdin:ferredoxin oxidoreductase (235 aa).

It belongs to the HY2 family.

It catalyses the reaction 15,16-dihydrobiliverdin + oxidized 2[4Fe-4S]-[ferredoxin] = biliverdin IXalpha + reduced 2[4Fe-4S]-[ferredoxin] + 2 H(+). Its function is as follows. Catalyzes the two-electron reduction of biliverdin IX-alpha at the C15 methine bridge. This chain is 15,16-dihydrobiliverdin:ferredoxin oxidoreductase, found in Synechococcus sp. (strain CC9902).